The sequence spans 331 residues: E3 ubiquitin-protein ligase Siah2 (331 aa).

The tract at residues 1–26 (MSRPSSAGGAAGGLGAGKAGGSKHGG) is disordered. The span at 9-26 (GAAGGLGAGKAGGSKHGG) shows a compositional bias: gly residues. Residues 89-124 (CPVCFDYVLPPILQCQAGHLVCNQCRQKLSCCPTCR) form an RING-type zinc finger. The SBD stretch occupies residues 139–331 (VASTLPFPCK…LGINVTISMC (193 aa)). An SIAH-type zinc finger spans residues 142-202 (TLPFPCKYSS…VMPHLMHAHK (61 aa)). The Zn(2+) site is built by Cys147, Cys154, His166, Cys170, Cys177, Cys184, His196, and His201.

The protein belongs to the SINA (Seven in absentia) family. Homodimer. In terms of tissue distribution, in embryos it is expressed in all blastomeres starting at the mid-blastulla. After 20 somite stage, it is expressed mainly in the posterior part. Expressed in brain, including the eye, the cranial cavity, otic vesicle, optic chiasm and in the gut.

The enzyme catalyses S-ubiquitinyl-[E2 ubiquitin-conjugating enzyme]-L-cysteine + [acceptor protein]-L-lysine = [E2 ubiquitin-conjugating enzyme]-L-cysteine + N(6)-ubiquitinyl-[acceptor protein]-L-lysine.. It participates in protein modification; protein ubiquitination. Its function is as follows. E3 ubiquitin-protein ligase that mediates ubiquitination and subsequent proteasomal degradation of target proteins. E3 ubiquitin ligases accept ubiquitin from an E2 ubiquitin-conjugating enzyme in the form of a thioester and then directly transfers the ubiquitin to targeted substrates. It probably triggers the ubiquitin-mediated degradation of different substrates. Induces cellular growth arrest by inhibiting the G2/M transition. May play a role in the regulation of the cellular clock function. This chain is E3 ubiquitin-protein ligase Siah2 (siah2l), found in Danio rerio (Zebrafish).